The sequence spans 477 residues: Cytochrome b mRNA maturase bI3 (477 aa).

The tract at residues 1–163 is cytochrome b; that stretch reads MRLLKSHPLL…IPWIGQDIVE (163 aa). The next 5 membrane-spanning stretches (helical) occupy residues 32-52, 86-106, 113-133, 142-162, and 166-186; these read FGSLLACCLIIQIVTGVTLAM, ASAFFFLVYLHIGRGMYYGSY, VWAIGTVILILMMATAFLGYV, WGATVITNLISAIPWIGQDIV, and IITLIINLSFIAILFSIVVVY. Residues 164-477 are maturase; sequence SKIITLIINL…YSTLNYPDAK (314 aa).

It in the N-terminal section; belongs to the cytochrome b family. This sequence in the C-terminal section; belongs to the LAGLIDADG endonuclease family.

It is found in the mitochondrion inner membrane. Functionally, mitochondrial mRNA maturase required for splicing of intron 3 of the cytochrome b (cob) gene, containing its own coding sequence. The chain is Cytochrome b mRNA maturase bI3 (bI3) from Neurospora crassa (strain ATCC 24698 / 74-OR23-1A / CBS 708.71 / DSM 1257 / FGSC 987).